The sequence spans 587 residues: Hatching enzyme (587 aa).

A signal peptide spans 1 to 18; the sequence is MANSGLILLVMFMIHVTT. Residues 19–166 constitute a propeptide, activation peptide; that stretch reads VHNVPLPSTA…PRCGVPDVLP (148 aa). Asparagine 64, asparagine 126, and asparagine 141 each carry an N-linked (GlcNAc...) asparagine glycan. The Cysteine switch signature appears at 157 to 164; the sequence is PRCGVPDV. Cysteine 159 and histidine 283 together coordinate Zn(2+). Residue glutamate 284 is part of the active site. Histidine 287 and histidine 293 together coordinate Zn(2+). The segment at 325–382 is disordered; that stretch reads LYGSNSGSGTTTTTRRPTTTRATTTRRTTTTRATTTRATTTTTTSPSRPSPPRRACSG. Over residues 334 to 371 the composition is skewed to low complexity; it reads TTTTTRRPTTTRATTTRRTTTTRATTTRATTTTTTSPS. Residues cysteine 380 and cysteine 582 are joined by a disulfide bond. Hemopexin repeat units lie at residues 381–422, 425–468, 469–513, and 518–570; these read SGSF…RFGF, PQNI…WVGL, PCNI…FNDV, and HDGV…IPQC. N-linked (GlcNAc...) asparagine glycosylation is present at asparagine 584.

This sequence belongs to the peptidase M10A family. It depends on Zn(2+) as a cofactor.

The catalysed reaction is Hydrolysis of proteins of the fertilization envelope and dimethylcasein.. Its function is as follows. Allows the sea urchin to digest the protective envelope derived from the egg extracellular matrix; thus allowing the sea urchin to swim freely. The sequence is that of Hatching enzyme from Paracentrotus lividus (Common sea urchin).